A 295-amino-acid polypeptide reads, in one-letter code: 33 kDa chaperonin (295 aa).

2 disulfides stabilise this stretch: Cys237–Cys239 and Cys270–Cys273.

Belongs to the HSP33 family. Under oxidizing conditions two disulfide bonds are formed involving the reactive cysteines. Under reducing conditions zinc is bound to the reactive cysteines and the protein is inactive.

It localises to the cytoplasm. Its function is as follows. Redox regulated molecular chaperone. Protects both thermally unfolding and oxidatively damaged proteins from irreversible aggregation. Plays an important role in the bacterial defense system toward oxidative stress. The sequence is that of 33 kDa chaperonin from Symbiobacterium thermophilum (strain DSM 24528 / JCM 14929 / IAM 14863 / T).